A 269-amino-acid polypeptide reads, in one-letter code: GTP cyclohydrolase FolE2 1 (269 aa).

It belongs to the GTP cyclohydrolase IV family.

The enzyme catalyses GTP + H2O = 7,8-dihydroneopterin 3'-triphosphate + formate + H(+). It participates in cofactor biosynthesis; 7,8-dihydroneopterin triphosphate biosynthesis; 7,8-dihydroneopterin triphosphate from GTP: step 1/1. In terms of biological role, converts GTP to 7,8-dihydroneopterin triphosphate. This is GTP cyclohydrolase FolE2 1 from Burkholderia cenocepacia (strain HI2424).